A 337-amino-acid chain; its full sequence is GTP 3',8-cyclase (337 aa).

Positions 17–243 (PFQRQYYYLR…HKSHTDGPAK (227 aa)) constitute a Radical SAM core domain. A GTP-binding site is contributed by Arg-26. Residues Cys-33 and Cys-37 each contribute to the [4Fe-4S] cluster site. Tyr-39 serves as a coordination point for S-adenosyl-L-methionine. Cys-40 serves as a coordination point for [4Fe-4S] cluster. Residue Arg-76 coordinates GTP. Gly-80 lines the S-adenosyl-L-methionine pocket. Thr-107 is a GTP binding site. Ser-131 serves as a coordination point for S-adenosyl-L-methionine. Lys-168 provides a ligand contact to GTP. Met-202 provides a ligand contact to S-adenosyl-L-methionine. [4Fe-4S] cluster-binding residues include Cys-265 and Cys-268. 270–272 (RLR) serves as a coordination point for GTP. Cys-282 serves as a coordination point for [4Fe-4S] cluster.

The protein belongs to the radical SAM superfamily. MoaA family. As to quaternary structure, monomer and homodimer. [4Fe-4S] cluster is required as a cofactor.

The catalysed reaction is GTP + AH2 + S-adenosyl-L-methionine = (8S)-3',8-cyclo-7,8-dihydroguanosine 5'-triphosphate + 5'-deoxyadenosine + L-methionine + A + H(+). The protein operates within cofactor biosynthesis; molybdopterin biosynthesis. Functionally, catalyzes the cyclization of GTP to (8S)-3',8-cyclo-7,8-dihydroguanosine 5'-triphosphate. In Haemophilus influenzae (strain PittEE), this protein is GTP 3',8-cyclase.